A 285-amino-acid chain; its full sequence is Ubiquinone biosynthesis protein COQ4, mitochondrial (285 aa).

Residues 1-11 (MPPAVRQGMRT) constitute a mitochondrion transit peptide. Zn(2+) is bound by residues His-166, Asp-167, His-170, and Glu-182.

This sequence belongs to the COQ4 family. As to quaternary structure, component of a multi-subunit COQ enzyme complex, composed of at least COQ3, COQ4, COQ5, COQ6, COQ7 and COQ9. The cofactor is Zn(2+).

It localises to the mitochondrion inner membrane. The catalysed reaction is a 4-hydroxy-3-methoxy-5-(all-trans-polyprenyl)benzoate + H(+) = a 2-methoxy-6-(all-trans-polyprenyl)phenol + CO2. It functions in the pathway cofactor biosynthesis; ubiquinone biosynthesis. In terms of biological role, lyase that catalyzes the C1-decarboxylation of 4-hydroxy-3-methoxy-5-(all-trans-polyprenyl)benzoic acid into 2-methoxy-6-(all-trans-polyprenyl)phenol during ubiquinone biosynthesis. The polypeptide is Ubiquinone biosynthesis protein COQ4, mitochondrial (Paracoccidioides lutzii (strain ATCC MYA-826 / Pb01) (Paracoccidioides brasiliensis)).